Here is a 168-residue protein sequence, read N- to C-terminus: Bifunctional protein PyrR (168 aa).

Substrate contacts are provided by residues 36 to 37 (TG), Arg-77, 94 to 102 (DDVLMSGRT), and Val-151. The PRPP-binding motif lies at 90–102 (LVLIDDVLMSGRT).

The protein belongs to the purine/pyrimidine phosphoribosyltransferase family. PyrR subfamily.

The catalysed reaction is UMP + diphosphate = 5-phospho-alpha-D-ribose 1-diphosphate + uracil. Its function is as follows. Regulates the transcription of the pyrimidine nucleotide (pyr) operon in response to exogenous pyrimidines. Also displays a weak uracil phosphoribosyltransferase activity which is not physiologically significant. This Pseudomonas fluorescens protein is Bifunctional protein PyrR.